Reading from the N-terminus, the 449-residue chain is Probable pectate lyase P59 (449 aa).

Residues 1-22 form the signal peptide; sequence MGGPKIKYSFLFLCITFATIIP. N-linked (GlcNAc...) asparagine glycosylation is found at asparagine 56, asparagine 80, and asparagine 81. Residues aspartate 245, aspartate 269, and aspartate 273 each contribute to the Ca(2+) site. Arginine 325 is a catalytic residue.

The protein belongs to the polysaccharide lyase 1 family. It depends on Ca(2+) as a cofactor. In terms of tissue distribution, expressed in anthers and pollen.

It carries out the reaction Eliminative cleavage of (1-&gt;4)-alpha-D-galacturonan to give oligosaccharides with 4-deoxy-alpha-D-galact-4-enuronosyl groups at their non-reducing ends.. It functions in the pathway glycan metabolism; pectin degradation; 2-dehydro-3-deoxy-D-gluconate from pectin: step 2/5. Might be needed during pollen development and tube growth. This chain is Probable pectate lyase P59 (LAT59), found in Solanum lycopersicum (Tomato).